The chain runs to 685 residues: DNA ligase (685 aa).

Residues 39 to 43 (DGEYD), 88 to 89 (SL), and glutamate 119 contribute to the NAD(+) site. Lysine 121 acts as the N6-AMP-lysine intermediate in catalysis. Arginine 142, glutamate 182, lysine 302, and lysine 326 together coordinate NAD(+). Positions 420, 423, 438, and 443 each coordinate Zn(2+). The 80-residue stretch at 606–685 (DNATFFSEKR…QTFLEHLDRG (80 aa)) folds into the BRCT domain.

This sequence belongs to the NAD-dependent DNA ligase family. LigA subfamily. Mg(2+) serves as cofactor. Requires Mn(2+) as cofactor.

The enzyme catalyses NAD(+) + (deoxyribonucleotide)n-3'-hydroxyl + 5'-phospho-(deoxyribonucleotide)m = (deoxyribonucleotide)n+m + AMP + beta-nicotinamide D-nucleotide.. Its function is as follows. DNA ligase that catalyzes the formation of phosphodiester linkages between 5'-phosphoryl and 3'-hydroxyl groups in double-stranded DNA using NAD as a coenzyme and as the energy source for the reaction. It is essential for DNA replication and repair of damaged DNA. The chain is DNA ligase from Desulforapulum autotrophicum (strain ATCC 43914 / DSM 3382 / VKM B-1955 / HRM2) (Desulfobacterium autotrophicum).